The primary structure comprises 1840 residues: Neurexin 1 (1840 aa).

Residues 1-50 (MKAPHSATYQDNYADAAMTARTRPSMDMDQQRNRNQAELRLLPAQRTSTS) form a disordered region. The Extracellular portion of the chain corresponds to 1 to 1696 (MKAPHSATYQ…NSIEEERTAM (1696 aa)). Residues 24 to 37 (PSMDMDQQRNRNQA) show a composition bias toward basic and acidic residues. A Laminin G-like 1 domain is found at 104-289 (GFQLDGSQNS…RDIKCGDVPC (186 aa)). An EGF-like 1 domain is found at 309–347 (TTDACERNDPCQHGGICISTDSGPICECRNLEYDGQYCE). Cystine bridges form between cysteine 313-cysteine 325, cysteine 319-cysteine 334, cysteine 336-cysteine 346, cysteine 511-cysteine 547, cysteine 710-cysteine 739, cysteine 746-cysteine 757, cysteine 751-cysteine 766, and cysteine 768-cysteine 778. 2 Laminin G-like domains span residues 352–547 (PSEA…EYQC) and 554–739 (DPVT…KPSC). One can recognise an EGF-like 2 domain in the interval 742 to 779 (QANVCNGNPCLNGGTCLEGWNRPICDCSATLYGGPTCG). 2 consecutive Laminin G-like domains span residues 784-964 (TLAF…LPSA) and 982-1158 (HAAT…VSGC). 4 disulfide bridges follow: cysteine 1130–cysteine 1158, cysteine 1164–cysteine 1175, cysteine 1169–cysteine 1184, and cysteine 1186–cysteine 1196. The EGF-like 3 domain occupies 1160 to 1197 (GPTKCSQNACANRGNCVQQWNAYACECDMTSYTGPTCY). The 216-residue stretch at 1201 to 1416 (IAYEFGNNKG…LIFSGAGSGC (216 aa)) folds into the Laminin G-like 6 domain. The tract at residues 1411-1651 (GAGSGCRGDD…DEHHPLPPLP (241 aa)) is disordered. Positions 1447-1472 (QTTTSQQGNSLSTGGSSSGGVITNGT) are enriched in low complexity. Residues 1491 to 1527 (TTEQFTSTSTARGSESNNEMVTITTTGRSDVTTEQHQ) are compositionally biased toward polar residues. Over residues 1528 to 1600 (GSSSSSSSGS…TTTTTTTTQA (73 aa)) the composition is skewed to low complexity. A compositionally biased stretch (basic and acidic residues) spans 1632 to 1646 (RNDHDRMQLPDEHHP). The chain crosses the membrane as a helical span at residues 1697–1717 (IIGIVAGILIAVVLVILLVLW). The Cytoplasmic portion of the chain corresponds to 1718–1840 (LKSNGDRGYK…DSKDVKEWYV (123 aa)). Residues 1737 to 1840 (GSHNPNAALL…DSKDVKEWYV (104 aa)) are disordered. A compositionally biased stretch (polar residues) spans 1747–1757 (GNTSTNGSYHQ). The span at 1774–1787 (QQQHHAQQQMHNGH) shows a compositional bias: low complexity. Residues 1788–1813 (NGNGNGGGGGGGGMMSSGSGSLGYGS) show a composition bias toward gly residues. Positions 1831 and 1834 each coordinate Zn(2+). Residues 1831 to 1840 (DSKDVKEWYV) are compositionally biased toward basic and acidic residues. Positions 1837–1840 (EWYV) match the PDZ domain binding motif.

This sequence belongs to the neurexin family. As to quaternary structure, interacts (via C-terminal PDZ binding motif) with CASK (via PDZ domain). Interacts (via cytoplasmic domain) with apolpp/ApoLI; the interaction supports apolpp/ApoLI protein stability. Interact (via cytoplasmic domain) with Spn/Spinophilin. Interacts with RhoGAP100F/Syd-1 (via PDZ domain); RhoGAP100F/Syd-1 may recruit Nrx-1 to the presynaptic active zone. In terms of tissue distribution, expressed in brain, with expression in medulla, lamina, lobula, lobula plate, mushroom body and antennal lobe, and in retina (at protein level). Expressed in rabdomere of photoreceptor cells (at protein level).

The protein localises to the synaptic cell membrane. It localises to the presynaptic cell membrane. It is found in the postsynaptic cell membrane. In terms of biological role, neuronal cell adhesion protein involved in synapse formation, development of synaptic active zones, synaptic regulation and visual function. Plays a role in cell adhesion between the pre- and the postsynaptic cell. Required for proper proliferation of synaptic boutons during larval development, a process necessary for coordinated matching of pre-and postsynaptic compartments. Promotes presynaptic active zone formation and neurotransmitter release. Spn/Spinophilin fine-tunes nrx-1/nlg1 signaling at the pre-synapse to control active zone number and functionality and thereby optimizing action potential-induced exocytosis. Required for synapse formation in central nervous system. By regulating synapse formation, may play a role in larval associative learning. Together with RhoGAP100F/syd-1, controls synapse formation at the neuromuscular junction. Essential for synaptic vesicle cycling, which plays critical roles in neurotransmission at neuromuscular junctions (NMJ). Regulated and restricts formation of glutamate receptor clusters. Mediates retinoid transport and subsequent rhodopsin maturation and may regulate lipoprotein function; thereby playing a role in vision. Regulates sleep, circadian rhythm and synaptic plasticity. Together with CASK, required for locomotion. The sequence is that of Neurexin 1 from Drosophila melanogaster (Fruit fly).